The following is a 530-amino-acid chain: GMP synthase [glutamine-hydrolyzing] (530 aa).

The Glutamine amidotransferase type-1 domain occupies 18–207; sequence TILVLDFGSQ…AVDICQAKTN (190 aa). Residue Cys94 is the Nucleophile of the active site. Residues His181 and Glu183 contribute to the active site. In terms of domain architecture, GMPS ATP-PPase spans 208 to 405; sequence WSMENFIDTE…LGVPEDLVWR (198 aa). 236 to 242 contributes to the ATP binding site; it reads SGGVDST. Residues Arg309, Asp467, Lys522, and Glu528 each coordinate XMP.

As to quaternary structure, homodimer. Mg(2+) is required as a cofactor.

The protein localises to the cytoplasm. Its subcellular location is the cytosol. The enzyme catalyses XMP + L-glutamine + ATP + H2O = GMP + L-glutamate + AMP + diphosphate + 2 H(+). It participates in purine metabolism; GMP biosynthesis; GMP from XMP (L-Gln route): step 1/1. In terms of biological role, catalyzes the conversion of xanthine monophosphate (XMP) to GMP in the presence of glutamine and ATP through an adenyl-XMP intermediate. This chain is GMP synthase [glutamine-hydrolyzing] (GUA1), found in Candida albicans (strain SC5314 / ATCC MYA-2876) (Yeast).